A 1136-amino-acid chain; its full sequence is Carbamoyl phosphate synthase large chain (1136 aa).

The carboxyphosphate synthetic domain stretch occupies residues methionine 1–aspartate 402. The ATP site is built by arginine 129, arginine 169, glycine 175, glycine 176, glutamate 208, isoleucine 210, glutamate 215, glycine 241, valine 242, histidine 243, glutamine 285, and glutamate 299. Residues lysine 133–leucine 328 form the ATP-grasp 1 domain. Positions 285, 299, and 301 each coordinate Mg(2+). Positions 285, 299, and 301 each coordinate Mn(2+). Positions lysine 403–threonine 551 are oligomerization domain. Residues glutamate 552–tyrosine 962 are carbamoyl phosphate synthetic domain. The region spanning glycine 681–alanine 881 is the ATP-grasp 2 domain. ATP contacts are provided by arginine 717, lysine 765, leucine 767, glutamate 772, glycine 797, valine 798, histidine 799, serine 800, glutamine 840, and glutamate 852. Glutamine 840, glutamate 852, and asparagine 854 together coordinate Mg(2+). Mn(2+) contacts are provided by glutamine 840, glutamate 852, and asparagine 854. Positions glutamate 963 to glutamine 1136 are allosteric domain. Residues glycine 964–leucine 1122 enclose the MGS-like domain.

The protein belongs to the CarB family. Composed of two chains; the small (or glutamine) chain promotes the hydrolysis of glutamine to ammonia, which is used by the large (or ammonia) chain to synthesize carbamoyl phosphate. Tetramer of heterodimers (alpha,beta)4. Mg(2+) serves as cofactor. It depends on Mn(2+) as a cofactor.

The catalysed reaction is hydrogencarbonate + L-glutamine + 2 ATP + H2O = carbamoyl phosphate + L-glutamate + 2 ADP + phosphate + 2 H(+). It catalyses the reaction hydrogencarbonate + NH4(+) + 2 ATP = carbamoyl phosphate + 2 ADP + phosphate + 2 H(+). The protein operates within amino-acid biosynthesis; L-arginine biosynthesis; carbamoyl phosphate from bicarbonate: step 1/1. It participates in pyrimidine metabolism; UMP biosynthesis via de novo pathway; (S)-dihydroorotate from bicarbonate: step 1/3. Its function is as follows. Large subunit of the glutamine-dependent carbamoyl phosphate synthetase (CPSase). CPSase catalyzes the formation of carbamoyl phosphate from the ammonia moiety of glutamine, carbonate, and phosphate donated by ATP, constituting the first step of 2 biosynthetic pathways, one leading to arginine and/or urea and the other to pyrimidine nucleotides. The large subunit (synthetase) binds the substrates ammonia (free or transferred from glutamine from the small subunit), hydrogencarbonate and ATP and carries out an ATP-coupled ligase reaction, activating hydrogencarbonate by forming carboxy phosphate which reacts with ammonia to form carbamoyl phosphate. The sequence is that of Carbamoyl phosphate synthase large chain from Bifidobacterium animalis subsp. lactis (strain AD011).